Reading from the N-terminus, the 438-residue chain is Xaa-Pro dipeptidase 2 (438 aa).

Residues D242, D253, H333, E378, and E414 each coordinate Mn(2+).

It belongs to the peptidase M24B family. Bacterial-type prolidase subfamily. The cofactor is Mn(2+).

The enzyme catalyses Xaa-L-Pro dipeptide + H2O = an L-alpha-amino acid + L-proline. Functionally, splits dipeptides with a prolyl residue in the C-terminal position. The sequence is that of Xaa-Pro dipeptidase 2 from Idiomarina loihiensis (strain ATCC BAA-735 / DSM 15497 / L2-TR).